The following is a 481-amino-acid chain: Glutamate--glyoxylate aminotransferase 1 (481 aa).

Residue K291 is modified to N6-(pyridoxal phosphate)lysine. The Peroxisomal targeting signal motif lies at 479-481 (SKM).

Belongs to the class-I pyridoxal-phosphate-dependent aminotransferase family. Alanine aminotransferase subfamily. Homodimer. Requires pyridoxal 5'-phosphate as cofactor. In terms of processing, the N-terminus is blocked. In terms of tissue distribution, mostly expressed in leaves, and, to a lower extent, in shoots, stems, flowers, seedlings and green siliques.

It is found in the peroxisome. It catalyses the reaction L-alanine + 2-oxoglutarate = pyruvate + L-glutamate. The catalysed reaction is glyoxylate + L-alanine = glycine + pyruvate. The enzyme catalyses glycine + 2-oxoglutarate = glyoxylate + L-glutamate. Its pathway is amino-acid biosynthesis; glycine biosynthesis; glycine from glyoxylate: step 1/1. It functions in the pathway photosynthesis; C4 acid pathway. It participates in amino-acid degradation; L-alanine degradation via transaminase pathway; pyruvate from L-alanine: step 1/1. Catalyzes the glutamate:glyoxylate (GGT or GGAT), alanine:glyoxylate (AGT), alanine:2-oxoglutarate (AKT) and glutamate:pyruvate (GPT) aminotransferase reactions in peroxisomes. Required for abscisic acid (ABA)- and stress-mediated responses in an H(2)O(2)-dependent manner. Functions as a photorespiratory aminotransferase that modulates amino acid content during photorespiration (GGAT activity); promotes serine, glycine and citrulline metabolism in response to light. This is Glutamate--glyoxylate aminotransferase 1 (GGAT1) from Arabidopsis thaliana (Mouse-ear cress).